Consider the following 156-residue polypeptide: Lipoprotein signal peptidase (156 aa).

The next 3 helical transmembrane spans lie at 5-25 (FFVV…TKQW), 63-83 (IEWQ…AIIA), and 90-110 (SNPY…GNLI). Catalysis depends on residues Asp120 and Asp138. A helical transmembrane segment spans residues 133-153 (AFNVADMGICVGAFFVCLAVY).

This sequence belongs to the peptidase A8 family.

It localises to the cell inner membrane. It carries out the reaction Release of signal peptides from bacterial membrane prolipoproteins. Hydrolyzes -Xaa-Yaa-Zaa-|-(S,diacylglyceryl)Cys-, in which Xaa is hydrophobic (preferably Leu), and Yaa (Ala or Ser) and Zaa (Gly or Ala) have small, neutral side chains.. The protein operates within protein modification; lipoprotein biosynthesis (signal peptide cleavage). Functionally, this protein specifically catalyzes the removal of signal peptides from prolipoproteins. This is Lipoprotein signal peptidase from Oleidesulfovibrio alaskensis (strain ATCC BAA-1058 / DSM 17464 / G20) (Desulfovibrio alaskensis).